Reading from the N-terminus, the 720-residue chain is Polyribonucleotide nucleotidyltransferase (720 aa).

Mg(2+) contacts are provided by Asp-485 and Asp-491. The KH domain maps to 552–615 (PRIHTIKINP…EAIRRIQALT (64 aa)). Residues 621 to 689 (GRIYEGKVTR…RQGRIRLSIK (69 aa)) form the S1 motif domain. The tract at residues 697 to 720 (PAAESVAESAPAQEAVVEQVPMTE) is disordered. Residues 698–720 (AAESVAESAPAQEAVVEQVPMTE) are compositionally biased toward low complexity.

It belongs to the polyribonucleotide nucleotidyltransferase family. In terms of assembly, component of the RNA degradosome, which is a multiprotein complex involved in RNA processing and mRNA degradation. It depends on Mg(2+) as a cofactor.

The protein localises to the cytoplasm. It carries out the reaction RNA(n+1) + phosphate = RNA(n) + a ribonucleoside 5'-diphosphate. Its function is as follows. Involved in mRNA degradation. Catalyzes the phosphorolysis of single-stranded polyribonucleotides processively in the 3'- to 5'-direction. The polypeptide is Polyribonucleotide nucleotidyltransferase (Tolumonas auensis (strain DSM 9187 / NBRC 110442 / TA 4)).